We begin with the raw amino-acid sequence, 319 residues long: Dehydrogenase/reductase SDR family member 9 (319 aa).

Positions Met-1–Asn-17 are cleaved as a signal peptide. Residues Ile-34–Ala-58 and Asp-83 each bind NAD(+). Ser-164 lines the substrate pocket. The active-site Proton acceptor is Tyr-176. Lys-180 is an NAD(+) binding site.

This sequence belongs to the short-chain dehydrogenases/reductases (SDR) family. As to quaternary structure, homotetramer.

The protein resides in the microsome membrane. It localises to the endoplasmic reticulum membrane. It catalyses the reaction 3beta-hydroxy-5alpha-pregnane-20-one + NAD(+) = 5alpha-pregnane-3,20-dione + NADH + H(+). It carries out the reaction 17beta-hydroxy-5alpha-androstan-3-one + NAD(+) = 5alpha-androstan-3,17-dione + NADH + H(+). The enzyme catalyses androsterone + NAD(+) = 5alpha-androstan-3,17-dione + NADH + H(+). The catalysed reaction is 5alpha-androstane-3alpha,17beta-diol + NAD(+) = 17beta-hydroxy-5alpha-androstan-3-one + NADH + H(+). It catalyses the reaction all-trans-retinol + NAD(+) = all-trans-retinal + NADH + H(+). It carries out the reaction 3alpha-hydroxy-5alpha-pregnan-20-one + NAD(+) = 5alpha-pregnane-3,20-dione + NADH + H(+). 3-alpha-hydroxysteroid dehydrogenase that converts 3-alpha-tetrahydroprogesterone (allopregnanolone) to dihydroxyprogesterone and 3-alpha-androstanediol to dihydroxyprogesterone. Also plays a role in the biosynthesis of retinoic acid from retinaldehyde. Can utilize both NADH and NADPH. This is Dehydrogenase/reductase SDR family member 9 (DHRS9) from Bos taurus (Bovine).